The primary structure comprises 265 residues: 4-hydroxy-tetrahydrodipicolinate reductase (265 aa).

NAD(+)-binding positions include 7-12 (GASGRM), Asp-33, 96-98 (GTT), and 120-123 (AANF). Residue His-153 is the Proton donor/acceptor of the active site. His-154 is a binding site for (S)-2,3,4,5-tetrahydrodipicolinate. Lys-157 acts as the Proton donor in catalysis. 163–164 (GT) contributes to the (S)-2,3,4,5-tetrahydrodipicolinate binding site.

The protein belongs to the DapB family.

The protein localises to the cytoplasm. It carries out the reaction (S)-2,3,4,5-tetrahydrodipicolinate + NAD(+) + H2O = (2S,4S)-4-hydroxy-2,3,4,5-tetrahydrodipicolinate + NADH + H(+). The enzyme catalyses (S)-2,3,4,5-tetrahydrodipicolinate + NADP(+) + H2O = (2S,4S)-4-hydroxy-2,3,4,5-tetrahydrodipicolinate + NADPH + H(+). It participates in amino-acid biosynthesis; L-lysine biosynthesis via DAP pathway; (S)-tetrahydrodipicolinate from L-aspartate: step 4/4. Functionally, catalyzes the conversion of 4-hydroxy-tetrahydrodipicolinate (HTPA) to tetrahydrodipicolinate. The polypeptide is 4-hydroxy-tetrahydrodipicolinate reductase (Cupriavidus taiwanensis (strain DSM 17343 / BCRC 17206 / CCUG 44338 / CIP 107171 / LMG 19424 / R1) (Ralstonia taiwanensis (strain LMG 19424))).